The chain runs to 392 residues: MASVEEIRNAQRAKGPATILAIGTATPDHCVYQSDYADYYFRVTKSEHMTALKKKFNRICDKSMIKKRYIHLTEEMLEEHPNIGAYMAPSLNIRQEIITAEVPKLGKEAALKALKEWGQPKSKITHLVFCTTSGVEMPGADYKLANLLGLEPSVRRVMLYHQGCYAGGTVLRTAKDLAENNAGARVLVVCSEITVVTFRGPSEDALDSLVGQALFGDGSAAVIVGSDPDISIERPLFQLVSAAQTFIPNSAGAIAGNLREVGLTFHLWPNVPTLISENIEKCLTQAFDPLGISDWNSLFWIAHPGGPAILDAVEAKLNLDKKKLEATRHVLSEYGNMSSACVLFILDEMRKKSLKGERATTGEGLDWGVLFGFGPGLTIETVVLHSIPMVTN.

55–58 provides a ligand contact to substrate; that stretch reads KFNR. Residue C164 is part of the active site. Residues L267 and 305–307 each bind substrate; that span reads GGP.

The protein belongs to the thiolase-like superfamily. Chalcone/stilbene synthases family. As to quaternary structure, homodimer.

Its subcellular location is the cytoplasm. The enzyme catalyses 4-coumaroyl-CoA + 3 malonyl-CoA + 3 H(+) = trans-resveratrol + 4 CO2 + 4 CoA. It participates in phytoalexin biosynthesis; 3,4',5-trihydroxystilbene biosynthesis; 3,4',5-trihydroxystilbene from trans-4-coumarate: step 2/2. Its function is as follows. Mediates resistance to pathogens which are sensitive to stilbenes. This is Stilbene synthase 2 from Vitis vinifera (Grape).